Consider the following 199-residue polypeptide: Desiccation stress protein DSP-22, chloroplastic (199 aa).

The transit peptide at 1–52 (MASSTCYATIPAMSCRGQSTITRFGPNNLFLGKQSYELPLMRRNAKFTVRSM) directs the protein to the chloroplast. A compositionally biased stretch (basic and acidic residues) spans 53–62 (REDNEKEEQQ). The tract at residues 53–82 (REDNEKEEQQQQKQQQTHDGGPDLTPNRTE) is disordered. 2 helical membrane passes run 130–152 (FNGGVMWFLLTSAVLVLATLIPI) and 172–191 (IWNGRFAMIGLVALAFTEYV).

Belongs to the ELIP/psbS family. Preferentially localized in the chloroplast-rich palisade parenchyma cells, in extracts of desiccated leaves, in seeds, but not in roots or untreated leaves.

It is found in the plastid. The protein resides in the chloroplast thylakoid membrane. Functionally, possibly exerts a protective role during water loss. The protein is Desiccation stress protein DSP-22, chloroplastic (DSP-22) of Craterostigma plantagineum (Blue gem).